A 1491-amino-acid chain; its full sequence is Pleckstrin homology domain-containing family H member 2 (1491 aa).

Residues 19 to 177 (ALEAQLMKFR…ELQEKKISCV (159 aa)) are a coiled coil. Disordered stretches follow at residues 232-435 (AEKP…PFQP), 506-546 (DDGL…LHRF), and 612-668 (SSSP…SDYA). The segment covering 253–264 (TSCSSEQNQKTR) has biased composition (polar residues). Basic and acidic residues predominate over residues 374 to 385 (KEQDSSSDELNK). Positions 392 to 406 (LDYTSSSSEANTPSP) are enriched in polar residues. Low complexity predominate over residues 657–666 (SDSSAASESD). PH domains lie at 702–796 (PLEK…SVLR) and 810–918 (KPAV…VAAG). The region spanning 954–1109 (HSKEGILSPL…PSRMEILSTL (156 aa)) is the MyTH4 domain. The region spanning 1120–1449 (FSIPVHFMNG…SYINSFHQQK (330 aa)) is the FERM domain. The tract at residues 1466–1491 (QAPQARVMGSQPPLSNSRPTKGPTLL) is disordered.

In terms of assembly, self-associates. Interacts with TGFB1I1. In terms of tissue distribution, expressed in the kidney and testis. Expressed in the kidney exclusively by glomerular podocytes.

It localises to the cytoplasm. The protein localises to the cytoskeleton. It is found in the cell membrane. The protein resides in the cell projection. Its subcellular location is the lamellipodium. In terms of biological role, in the kidney glomerulus may play a role in linking podocyte foot processes to the glomerular basement membrane. May be involved in stabilization of F-actin by attenuating its depolymerization. Can recruit TGFB1I1 from focal adhesions to podocyte lamellipodia. This chain is Pleckstrin homology domain-containing family H member 2 (Plekhh2), found in Mus musculus (Mouse).